Reading from the N-terminus, the 50-residue chain is Thrombin-like enzyme BpirSP27 (50 aa).

The region spanning valine 1–lysine 50 is the Peptidase S1 domain. An N-linked (GlcNAc...) asparagine glycan is attached at asparagine 20. The cysteines at positions 26 and 42 are disulfide-linked. The Charge relay system role is filled by histidine 41.

The protein belongs to the peptidase S1 family. Snake venom subfamily. As to quaternary structure, monomer. In terms of processing, N-glycosylated. As to expression, expressed by the venom gland.

The protein localises to the secreted. Inhibited by serine protease inhibitors PMSF, benzamidine, leupeptin and aprotinin, as well as by copper (Cu2+) and manganese (Mn2+) ions. Not inhibited by metalloprotease inhibitors EDTA, EGTA and 1,10-phenanthroline, as well as by barium (Ba2+) and calcium ion (Ca2+). In terms of biological role, snake venom serine protease that interferes with the hemostatic system of the prey. It preferentially degrades the Bbeta chain (FGB) of fibrinogen, with minor effects on the Aalpha chain (FGA). It presents a lower ability to degrade fibrin clots than BpirSP41. It hydrolyzes chromogenic substrates S-2238 (used for testing thrombin activity), S-2222 (factor Xa), S-2266 (glandular kallikrein and factor XIa), S-2302 (plasma kallikrein, factor XIa and XIIa), and S-2251 (plasmin). It shows a decrease in the clotting time of human plasma in the presence of increasing doses of the enzyme. Its minimum coagulant dose (MCD) is 3.5 ug. It also promotes platelet aggregation in a concentration-dependent manner in the presence or absence of calcium. It also shows 20% inhibition of the hemolytic activity promoted by the complement pathways and possess only a minor role in the induction of edema and pain in rat. This chain is Thrombin-like enzyme BpirSP27, found in Bothrops pirajai (Piraja's lancehead).